We begin with the raw amino-acid sequence, 92 residues long: Small ribosomal subunit protein uS19 (92 aa).

The protein belongs to the universal ribosomal protein uS19 family.

In terms of biological role, protein S19 forms a complex with S13 that binds strongly to the 16S ribosomal RNA. In Geobacillus sp. (strain WCH70), this protein is Small ribosomal subunit protein uS19.